The chain runs to 93 residues: Small ribosomal subunit protein uS19 (93 aa).

Belongs to the universal ribosomal protein uS19 family.

Protein S19 forms a complex with S13 that binds strongly to the 16S ribosomal RNA. In Clostridioides difficile (strain 630) (Peptoclostridium difficile), this protein is Small ribosomal subunit protein uS19.